Consider the following 274-residue polypeptide: MRKIAIYGKGGIGKSTTTQNTVAGLVEMGRKVMVVGCDPKADSTRLLLHGLAQKTVLDTLRDEGEDVELEDVMKKGFKDTSCVESGGPEPGVGCAGRGIITSINLLEQLGAYDDDKQLDYVFYDVLGDVVCGGFAMPIRDGKAQEVYIVCSGEMMAMYAANNICKSIHKFGKVGDVRLGGLICNSRKVDNEANMIGEFAKKLGTQMIHFVPRDNMVQHAEINRKTVIDYAPDHSQADEYRTLASKIDNNTMMVIPNPLSIQELEDLLIGFGIMN.

8-15 (GKGGIGKS) serves as a coordination point for ATP. [4Fe-4S] cluster is bound at residue Cys94. Arg97 carries the ADP-ribosylarginine; by dinitrogenase reductase ADP-ribosyltransferase modification. Cys131 serves as a coordination point for [4Fe-4S] cluster.

It belongs to the NifH/BchL/ChlL family. In terms of assembly, homodimer. Requires [4Fe-4S] cluster as cofactor. The reversible ADP-ribosylation of Arg-97 inactivates the nitrogenase reductase and regulates nitrogenase activity.

The enzyme catalyses N2 + 8 reduced [2Fe-2S]-[ferredoxin] + 16 ATP + 16 H2O = H2 + 8 oxidized [2Fe-2S]-[ferredoxin] + 2 NH4(+) + 16 ADP + 16 phosphate + 6 H(+). In terms of biological role, the key enzymatic reactions in nitrogen fixation are catalyzed by the nitrogenase complex, which has 2 components: the iron protein and the molybdenum-iron protein. The polypeptide is Nitrogenase iron protein (Azobacteroides pseudotrichonymphae genomovar. CFP2).